We begin with the raw amino-acid sequence, 80 residues long: Protein FAM229B (80 aa).

The disordered stretch occupies residues 1–45; that stretch reads MPFRFGTQPRRFPVEGGDSSIELESGLSSSASCTGKETSPNRQLR. Low complexity predominate over residues 15 to 32; the sequence is EGGDSSIELESGLSSSAS. Residues 33–42 are compositionally biased toward polar residues; that stretch reads CTGKETSPNR.

It belongs to the FAM229 family.

This chain is Protein FAM229B (Fam229b), found in Mus musculus (Mouse).